The following is a 169-amino-acid chain: Putative tRNA (cytidine(34)-2'-O)-methyltransferase (169 aa).

S-adenosyl-L-methionine contacts are provided by Ile-79, Gly-104, Ile-125, and Ser-133.

It belongs to the class IV-like SAM-binding methyltransferase superfamily. RNA methyltransferase TrmH family. TrmL subfamily.

It localises to the cytoplasm. The catalysed reaction is cytidine(34) in tRNA + S-adenosyl-L-methionine = 2'-O-methylcytidine(34) in tRNA + S-adenosyl-L-homocysteine + H(+). It carries out the reaction 5-carboxymethylaminomethyluridine(34) in tRNA(Leu) + S-adenosyl-L-methionine = 5-carboxymethylaminomethyl-2'-O-methyluridine(34) in tRNA(Leu) + S-adenosyl-L-homocysteine + H(+). Could methylate the ribose at the nucleotide 34 wobble position in tRNA. This Listeria innocua serovar 6a (strain ATCC BAA-680 / CLIP 11262) protein is Putative tRNA (cytidine(34)-2'-O)-methyltransferase.